The following is a 444-amino-acid chain: Protein cereblon (444 aa).

The disordered stretch occupies residues Met-1–Asp-52. Over residues Ala-23–Asp-37 the composition is skewed to acidic residues. One can recognise a Lon N-terminal domain in the interval Cys-80 to Thr-321. The CULT domain occupies Cys-320–Ile-428. 2 residues coordinate Zn(2+): Cys-325 and Cys-328. (S)-thalidomide contacts are provided by His-380, Trp-382, and Trp-388. The Zn(2+) site is built by Cys-393 and Cys-396.

It belongs to the CRBN family. In terms of assembly, component of a DCX (DDB1-CUL4-X-box) protein ligase complex, at least composed of CRBN, CUL4A, DDB1 and RBX1. Interacts directly with DDB1. Interacts with KCNT1. Interacts with ILF2. Interacts with TRAF6 and ECSIT. In terms of processing, ubiquitinated, ubiquitination is mediated by its own DCX protein ligase complex.

It is found in the cytoplasm. The protein localises to the nucleus. Its subcellular location is the membrane. Its pathway is protein modification; protein ubiquitination. Substrate recognition component of a DCX (DDB1-CUL4-X-box) E3 protein ligase complex that mediates the ubiquitination and subsequent proteasomal degradation of target proteins, such as MEIS2, ILF2 or GLUL. Normal degradation of key regulatory proteins is required for normal limb outgrowth and expression of the fibroblast growth factor FGF8. Maintains presynaptic glutamate release and consequently cognitive functions, such as memory and learning, by negatively regulating large-conductance calcium-activated potassium (BK) channels in excitatory neurons. Likely to function by regulating the assembly and neuronal surface expression of BK channels via its interaction with KCNT1. May also be involved in regulating anxiety-like behaviors via a BK channel-independent mechanism. Plays a negative role in TLR4 signaling by interacting with TRAF6 and ECSIT, leading to inhibition of ECSIT ubiquitination, an important step of the signaling. This Bos taurus (Bovine) protein is Protein cereblon (CRBN).